A 725-amino-acid polypeptide reads, in one-letter code: Endoglucanase G (725 aa).

The first 35 residues, 1–35 (MLKTKRKLTKAIGVALSISILSSLVSFIPQTNTYA), serve as a signal peptide directing secretion. The Nucleophile role is filled by Asp-93. Residues His-408, Asp-446, and Glu-455 contribute to the active site. Residues 489–650 (ITNDEVIIKA…GVKVFGNEPA (162 aa)) form the CBM3 domain. In terms of domain architecture, Dockerin spans 658–724 (PEILYGDVNS…LLGTITQLPQ (67 aa)).

The protein belongs to the glycosyl hydrolase 9 (cellulase E) family.

It carries out the reaction Endohydrolysis of (1-&gt;4)-beta-D-glucosidic linkages in cellulose, lichenin and cereal beta-D-glucans.. The protein operates within glycan metabolism; cellulose degradation. Its function is as follows. The biological conversion of cellulose to glucose generally requires three types of hydrolytic enzymes: (1) Endoglucanases which cut internal beta-1,4-glucosidic bonds; (2) Exocellobiohydrolases that cut the disaccharide cellobiose from the non-reducing end of the cellulose polymer chain; (3) Beta-1,4-glucosidases which hydrolyze the cellobiose and other short cello-oligosaccharides to glucose. This chain is Endoglucanase G (celCCG), found in Ruminiclostridium cellulolyticum (strain ATCC 35319 / DSM 5812 / JCM 6584 / H10) (Clostridium cellulolyticum).